Here is a 378-residue protein sequence, read N- to C-terminus: Histidinol-phosphate aminotransferase 2 (378 aa).

Lys-240 is modified (N6-(pyridoxal phosphate)lysine).

It belongs to the class-II pyridoxal-phosphate-dependent aminotransferase family. Histidinol-phosphate aminotransferase subfamily. As to quaternary structure, homodimer. Pyridoxal 5'-phosphate is required as a cofactor.

The catalysed reaction is L-histidinol phosphate + 2-oxoglutarate = 3-(imidazol-4-yl)-2-oxopropyl phosphate + L-glutamate. The protein operates within amino-acid biosynthesis; L-histidine biosynthesis; L-histidine from 5-phospho-alpha-D-ribose 1-diphosphate: step 7/9. This is Histidinol-phosphate aminotransferase 2 (hisC2) from Caulobacter vibrioides (strain ATCC 19089 / CIP 103742 / CB 15) (Caulobacter crescentus).